A 270-amino-acid chain; its full sequence is tRNA pseudouridine synthase A (270 aa).

Residue Asp-60 is the Nucleophile of the active site. The segment at 107 to 111 (FHARF) is RNA binding. Residue Tyr-118 coordinates substrate. Residues 168 to 172 (QCQSR) are interaction with tRNA.

Belongs to the tRNA pseudouridine synthase TruA family. In terms of assembly, homodimer.

The catalysed reaction is uridine(38/39/40) in tRNA = pseudouridine(38/39/40) in tRNA. Formation of pseudouridine at positions 38, 39 and 40 in the anticodon stem and loop of transfer RNAs. The polypeptide is tRNA pseudouridine synthase A (Klebsiella pneumoniae (strain 342)).